We begin with the raw amino-acid sequence, 76 residues long: Conotoxin VnMKLT2-013 (76 aa).

A signal peptide spans 1–23 (MMKLTCVLIIAVLFLTACQLTTA). Positions 24–42 (ETRDEYRAVRSSDEVQNSR) are excised as a propeptide. The tract at residues 29-49 (YRAVRSSDEVQNSRSTDDCST) is disordered. 3 disulfide bridges follow: Cys47–Cys58, Cys52–Cys63, and Cys57–Cys72.

It belongs to the conotoxin O1 superfamily. In terms of tissue distribution, expressed by the venom duct.

The protein resides in the secreted. The chain is Conotoxin VnMKLT2-013 from Conus ventricosus (Mediterranean cone).